The chain runs to 210 residues: Leucyl/phenylalanyl-tRNA--protein transferase (210 aa).

Belongs to the L/F-transferase family.

The protein resides in the cytoplasm. It carries out the reaction N-terminal L-lysyl-[protein] + L-leucyl-tRNA(Leu) = N-terminal L-leucyl-L-lysyl-[protein] + tRNA(Leu) + H(+). The catalysed reaction is N-terminal L-arginyl-[protein] + L-leucyl-tRNA(Leu) = N-terminal L-leucyl-L-arginyl-[protein] + tRNA(Leu) + H(+). It catalyses the reaction L-phenylalanyl-tRNA(Phe) + an N-terminal L-alpha-aminoacyl-[protein] = an N-terminal L-phenylalanyl-L-alpha-aminoacyl-[protein] + tRNA(Phe). In terms of biological role, functions in the N-end rule pathway of protein degradation where it conjugates Leu, Phe and, less efficiently, Met from aminoacyl-tRNAs to the N-termini of proteins containing an N-terminal arginine or lysine. This chain is Leucyl/phenylalanyl-tRNA--protein transferase, found in Ruegeria pomeroyi (strain ATCC 700808 / DSM 15171 / DSS-3) (Silicibacter pomeroyi).